The following is a 328-amino-acid chain: Ribosomal RNA large subunit methyltransferase F (328 aa).

Positions 1–38 (MTDTPKPPRKKPQRPAKPAAPREKATLHPRNRHQGHYD) are disordered.

The protein belongs to the methyltransferase superfamily. METTL16/RlmF family.

The protein localises to the cytoplasm. It catalyses the reaction adenosine(1618) in 23S rRNA + S-adenosyl-L-methionine = N(6)-methyladenosine(1618) in 23S rRNA + S-adenosyl-L-homocysteine + H(+). Specifically methylates the adenine in position 1618 of 23S rRNA. The chain is Ribosomal RNA large subunit methyltransferase F from Pseudomonas syringae pv. tomato (strain ATCC BAA-871 / DC3000).